The sequence spans 191 residues: UPF0669 protein C6orf120 (191 aa).

A signal peptide spans 1–30 (MAAPRGRAAPWTTALLLLLASQVLSPGSCA). An N-linked (GlcNAc...) asparagine glycan is attached at N53.

It belongs to the UPF0669 family. As to expression, mainly expressed in hepatocytes and some weak expression in germinal center cells of lymph nodes.

The protein localises to the secreted. In terms of biological role, may be involved in induction of apoptosis in CD4(+) T-cells, but not CD8(+) T-cells or hepatocytes. The protein is UPF0669 protein C6orf120 (C6orf120) of Homo sapiens (Human).